The primary structure comprises 355 residues: UDP-N-acetylglucosamine--N-acetylmuramyl-(pentapeptide) pyrophosphoryl-undecaprenol N-acetylglucosamine transferase (355 aa).

Residues 15–17 (TGG), asparagine 127, arginine 163, serine 191, isoleucine 244, 263–268 (ALTVSE), and glutamine 288 each bind UDP-N-acetyl-alpha-D-glucosamine.

Belongs to the glycosyltransferase 28 family. MurG subfamily.

Its subcellular location is the cell inner membrane. It carries out the reaction di-trans,octa-cis-undecaprenyl diphospho-N-acetyl-alpha-D-muramoyl-L-alanyl-D-glutamyl-meso-2,6-diaminopimeloyl-D-alanyl-D-alanine + UDP-N-acetyl-alpha-D-glucosamine = di-trans,octa-cis-undecaprenyl diphospho-[N-acetyl-alpha-D-glucosaminyl-(1-&gt;4)]-N-acetyl-alpha-D-muramoyl-L-alanyl-D-glutamyl-meso-2,6-diaminopimeloyl-D-alanyl-D-alanine + UDP + H(+). The protein operates within cell wall biogenesis; peptidoglycan biosynthesis. Its function is as follows. Cell wall formation. Catalyzes the transfer of a GlcNAc subunit on undecaprenyl-pyrophosphoryl-MurNAc-pentapeptide (lipid intermediate I) to form undecaprenyl-pyrophosphoryl-MurNAc-(pentapeptide)GlcNAc (lipid intermediate II). This is UDP-N-acetylglucosamine--N-acetylmuramyl-(pentapeptide) pyrophosphoryl-undecaprenol N-acetylglucosamine transferase from Escherichia coli O157:H7.